The chain runs to 26 residues: Conotoxin reg6(gamma) (26 aa).

Acidic residues predominate over residues 1 to 12 (RVLEPGXEDPDV). Residues 1 to 26 (RVLEPGXEDPDVGEPAGEYEHHLLEX) are disordered. Glutamate 4 is subject to 4-carboxyglutamate. Residue proline 5 is modified to 4-hydroxyproline. Residue glutamate 8 is modified to 4-carboxyglutamate. At proline 10 the chain carries 4-hydroxyproline. Glutamate 14 carries the post-translational modification 4-carboxyglutamate. A 4-hydroxyproline modification is found at proline 15. 4-carboxyglutamate is present on residues glutamate 18, glutamate 20, and glutamate 25.

Expressed by the venom duct.

Its subcellular location is the secreted. The sequence is that of Conotoxin reg6(gamma) from Conus regius (Crown cone).